We begin with the raw amino-acid sequence, 100 residues long: Large ribosomal subunit protein eL30 (100 aa).

Belongs to the eukaryotic ribosomal protein eL30 family.

In Aeropyrum pernix (strain ATCC 700893 / DSM 11879 / JCM 9820 / NBRC 100138 / K1), this protein is Large ribosomal subunit protein eL30 (rpl30e).